The following is a 361-amino-acid chain: D-amino-acid oxidase (361 aa).

The first 22 residues, 1–22 (MSNTIVVVGAGVIGLTSALLLS), serve as a signal peptide directing secretion. FAD contacts are provided by alanine 10, isoleucine 13, lysine 34, histidine 35, alanine 45, serine 46, glycine 50, and asparagine 52. N-linked (GlcNAc...) asparagine glycosylation is found at asparagine 193 and asparagine 222. Positions 242, 258, and 305 each coordinate (R)-lactate. Residues tyrosine 242, tyrosine 258, and arginine 305 each contribute to the anthranilate site. Arginine 305, serine 332, glycine 335, tyrosine 336, and glutamine 337 together coordinate FAD. The Microbody targeting signal signature appears at 359–361 (SKL).

This sequence belongs to the DAMOX/DASOX family. FAD is required as a cofactor. Post-translationally, the N-terminus is blocked.

Its subcellular location is the peroxisome matrix. The enzyme catalyses a D-alpha-amino acid + O2 + H2O = a 2-oxocarboxylate + H2O2 + NH4(+). Its function is as follows. Catalyzes the oxidative deamination of D-amino acids with broad substrate specificity. Enables the organism to utilize D-amino acids as a source of nutrients. The protein is D-amino-acid oxidase of Fusarium vanettenii (Neocosmospora pisi).